We begin with the raw amino-acid sequence, 215 residues long: Adenylate kinase (215 aa).

10–15 (GAGKGT) contacts ATP. Residues 30-59 (STGDILRANVREGTELGLAAKAYMDKGELV) form an NMP region. Residues Thr-31, Arg-36, 57-59 (ELV), 85-88 (GYPR), and Gln-92 contribute to the AMP site. An LID region spans residues 126–162 (GRLMCKCGASYHTIANPPKKDNICDICGGEVYQRDDD). Residue Arg-127 participates in ATP binding. Cys-130 and Cys-132 together coordinate Zn(2+). 135–136 (SY) is an ATP binding site. Zn(2+)-binding residues include Cys-149 and Cys-152. 2 residues coordinate AMP: Arg-159 and Arg-170. Lys-198 serves as a coordination point for ATP.

This sequence belongs to the adenylate kinase family. Monomer.

It is found in the cytoplasm. The catalysed reaction is AMP + ATP = 2 ADP. It participates in purine metabolism; AMP biosynthesis via salvage pathway; AMP from ADP: step 1/1. Catalyzes the reversible transfer of the terminal phosphate group between ATP and AMP. Plays an important role in cellular energy homeostasis and in adenine nucleotide metabolism. The protein is Adenylate kinase of Methanosarcina mazei (strain ATCC BAA-159 / DSM 3647 / Goe1 / Go1 / JCM 11833 / OCM 88) (Methanosarcina frisia).